The chain runs to 74 residues: Cytochrome c oxidase copper chaperone 1 (74 aa).

Residues 1-30 are disordered; sequence MTDQPAQNGLIPPPTSEPSKAAASAETKPK. Positions 34 and 35 each coordinate Cu cation. Positions 34–74 constitute a CHCH domain; sequence CCACPDTKKLRDECIVEHGESACTKWIEAHKICLRAEGFNV. 2 consecutive short sequence motifs (cx9C motif) follow at residues 37–47 and 56–66; these read CPDTKKLRDEC and CTKWIEAHKIC. Intrachain disulfides connect Cys37-Cys66 and Cys47-Cys56.

Belongs to the COX17 family.

Its subcellular location is the mitochondrion intermembrane space. Its function is as follows. Copper chaperone for cytochrome c oxidase (COX). Binds 2 copper ions and delivers them to the Cu(A) site of COX. Can complement the yeast mutant cox17. In Arabidopsis thaliana (Mouse-ear cress), this protein is Cytochrome c oxidase copper chaperone 1 (COX17-1).